A 544-amino-acid polypeptide reads, in one-letter code: MAAKQVLFSDEARAKMLDGVNTLANAVKVTLGPKGRNVVLDKSFGAPTITKDGVSVAKEIELEDKFENMGAQIVKEVASKTADVAGDGTTTATVLAQALLTEGLKAVAAGINPMDLKRGIDKATARLVEELKALSKPCSDPKSIEQVGTISANSDATVGKLIADAMAKVGKEGVITVEEGKGFEDELDVVEGMQFDRGYLSPYFATNQENMTTDLENPYILIVDKKISNIRDLLPILEGVSKSGRALLIIAEDVESEALATLVVNNMRGVVKVCAVKAPGFGDRRKAMLEDIATLTGATFVSEDLSMKLEETNMEHLGTASRVQVTKDNTTIIDGAGEKEAIAKRINVIKANIAEANSDYDREKLQERLAKLSGGVAVIKVGAVTEAEMKEKKDRVDDALHATRAAVEEGIVAGGGVALIRAQKALDGLTGENDDQNHGIALLRKAIEAPLRQIVSNAGGESSVVVNQVKANQGNYGYNAANDTYGDMVEMGILDPTKVTRSALQHAASIAGLMITTEAMIGEIKEAAPAMPMGGGMGGMPGMI.

Residues 30–33, Lys51, 87–91, Gly415, 479–481, and Asp495 contribute to the ATP site; these read TLGP, DGTTT, and NAA.

The protein belongs to the chaperonin (HSP60) family. Forms a cylinder of 14 subunits composed of two heptameric rings stacked back-to-back. Interacts with the co-chaperonin GroES.

It localises to the cytoplasm. It catalyses the reaction ATP + H2O + a folded polypeptide = ADP + phosphate + an unfolded polypeptide.. In terms of biological role, together with its co-chaperonin GroES, plays an essential role in assisting protein folding. The GroEL-GroES system forms a nano-cage that allows encapsulation of the non-native substrate proteins and provides a physical environment optimized to promote and accelerate protein folding. The sequence is that of Chaperonin GroEL from Francisella tularensis subsp. mediasiatica (strain FSC147).